The primary structure comprises 329 residues: GDP-mannose transporter (329 aa).

Topologically, residues 1-11 are cytoplasmic; sequence MADKGSVAAKS. Residues 12–32 form a helical membrane-spanning segment; it reads LTNSAPLSIFSYCAASILMTV. Residues 33–40 are Lumenal-facing; that stretch reads TNKYAVSG. A helical transmembrane segment spans residues 41–61; the sequence is VDFNFNFFLLAVQGIVCITLI. Topologically, residues 62-83 are cytoplasmic; that stretch reads SSLKQLNVITFREFNKVEAKKW. Residues 84–104 form a helical membrane-spanning segment; it reads FPIAVLLVVMIYTSSKALQYL. The Lumenal segment spans residues 105–107; that stretch reads SIP. Residues 108 to 128 traverse the membrane as a helical segment; that stretch reads IYTIFKNLTIILIAYGEVIWF. The Cytoplasmic segment spans residues 129–131; that stretch reads GGR. The chain crosses the membrane as a helical span at residues 132 to 152; that stretch reads VTNLALGSFVLMVLSSAVASY. Over 153–163 the chain is Lumenal; the sequence is GDSNVDTGKLN. Residues 164–184 form a helical membrane-spanning segment; that stretch reads FNIGYFWMFTNCFSSAAFVLF. Residues 185–196 are Cytoplasmic-facing; sequence MRKRIKLTNFKD. The helical transmembrane segment at 197 to 217 threads the bilayer; it reads FDTMYYNNLLSIPILLFASLT. Residues 218 to 237 are Lumenal-facing; it reads TEDWSAKNIAQNFPEDTKYA. A helical membrane pass occupies residues 238 to 258; sequence VIASMIISGMSAVGISYTSAW. Over 259 to 266 the chain is Cytoplasmic; the sequence is CVRVTSST. Residues 267-287 traverse the membrane as a helical segment; it reads TYSMVGALNKLPIALSGLLFF. At 288–290 the chain is on the lumenal side; it reads KAP. A helical transmembrane segment spans residues 291–311; sequence INFYSISSIFIGFAAGLVYAI. Topologically, residues 312–329 are cytoplasmic; the sequence is AKQKQKKEDELQLPTDKS.

It belongs to the TPT transporter family. SLC35D subfamily. In terms of assembly, homooligomer.

The protein localises to the golgi apparatus membrane. The protein resides in the cytoplasmic vesicle membrane. It is found in the endoplasmic reticulum membrane. Its function is as follows. Involved in the import of GDP-mannose from the cytoplasm into the Golgi lumen. This Komagataella pastoris (Yeast) protein is GDP-mannose transporter (VIG4).